A 696-amino-acid chain; its full sequence is MDNRNTQMYTEGRIKVPGTQPSPGLRITIKRAGVEPTIPGVSQVMFPDASEVGSRKQLSSASGGPEKGPRYRDTFKEGPSELRTQEQRPPAKPGKKQSSWVPQEGSQELQAGQDQSELGLLPSWVPEGPEGLQQLGSGKEIEGQQRRQRNRGTGEDEPPESCQGPGYQSTLGHQADVVQPAEPCCPLAGRGQPLGDKRPKEADVPHIRPQEAPPEPSPGAHGDSSQEAMPPTSTVAPEEKTASSFLPSMPGPTKTKGGGEAVETQPAPGPLPPPEVRDIGERREPDRVQQQPQKPVVAAGTQNLRKFRQGFMKCLLEMEKVEASHRRALKARSLTAQKSPRTLTPVPTSSPSLPQTPASAPASGPSWARLSAPGPEPAPVGASVPTSTPCPVLLCPALDLGWRRMELSHHSSERTLSYAKARQEPEEQSLQKLYQNREKSEEQLTLKQEEAFRSYFEIFNGPGEVDAQSLKNILLLMGFSVTPAQVEDALMSADVNGDGHVDFKDFLAVMTDTRRFFCSVEQNALTDMAPHNPHTLLFEILPLLVEMLALPEAVLEEITNYYQKKLKAGTCKAQEMEAAIGRLRLQKQLPYNPQQEESSEVPERKVLSILSRLKQQNYAPNLQSPYAQVPCIPLCPRMDKKMVRRKPTNHYVQDQCTTPGLAPDIRSPFFQSRSQGNREHNSDSRKWPSSVPSRTH.

2 disordered regions span residues 1–301 (MDNR…AAGT) and 329–386 (LKAR…SVPT). Basic and acidic residues predominate over residues 67–86 (KGPRYRDTFKEGPSELRTQE). Over residues 96–116 (KQSSWVPQEGSQELQAGQDQS) the composition is skewed to polar residues. Basic and acidic residues predominate over residues 195–209 (GDKRPKEADVPHIRP). Positions 223 to 235 (DSSQEAMPPTSTV) are enriched in polar residues. The span at 275–287 (EVRDIGERREPDR) shows a compositional bias: basic and acidic residues. Composition is skewed to low complexity over residues 288–297 (VQQQPQKPVV) and 339–366 (SPRT…SGPS). The stretch at 424–451 (EPEEQSLQKLYQNREKSEEQLTLKQEEA) forms a coiled coil. The region spanning 481–516 (VTPAQVEDALMSADVNGDGHVDFKDFLAVMTDTRRF) is the EF-hand domain. Ca(2+)-binding residues include Asp-494, Asn-496, Asp-498, His-500, and Asp-505. The interval 646-696 (KPTNHYVQDQCTTPGLAPDIRSPFFQSRSQGNREHNSDSRKWPSSVPSRTH) is disordered. Residues 676-686 (GNREHNSDSRK) are compositionally biased toward basic and acidic residues.

In terms of biological role, involved in the differentiation of haploid spermatids. This is Spermatogenesis-associated protein 21 (SPATA21) from Macaca fascicularis (Crab-eating macaque).